The following is a 476-amino-acid chain: Raffinose invertase (476 aa).

Substrate is bound by residues 35–38 (WMND), glutamine 54, 97–98 (FS), 159–160 (RD), glutamate 214, and tryptophan 297. Aspartate 38 is a catalytic residue.

It belongs to the glycosyl hydrolase 32 family. As to quaternary structure, homodimer.

It catalyses the reaction Hydrolysis of terminal non-reducing beta-D-fructofuranoside residues in beta-D-fructofuranosides.. Its function is as follows. May prevent the potential hasard of excessive sucrose accumulation. This is Raffinose invertase (rafD) from Escherichia coli.